Reading from the N-terminus, the 1500-residue chain is Synaptonemal complex protein 2 (1500 aa).

A phosphoserine mark is found at Ser-457 and Ser-458. The residue at position 464 (Thr-464) is a Phosphothreonine. A Phosphoserine modification is found at Ser-487. A Phosphothreonine modification is found at Thr-496. Residues Ser-500, Ser-509, Ser-518, and Ser-527 each carry the phosphoserine modification. The segment at 512-548 (KAVSKTSESGMDYAASPKSRQSDGRKRWNNRANHNKT) is disordered. Phosphothreonine is present on residues Thr-608 and Thr-633. Phosphoserine is present on residues Ser-646, Ser-650, and Ser-741. Residues 796–820 (NPSDSMMSTRKLKEPQDGSGFSKKP) are disordered. Ser-914 bears the Phosphoserine mark. The residue at position 916 (Thr-916) is a Phosphothreonine. 2 disordered regions span residues 940–1010 (LMDY…TSES) and 1029–1084 (KEET…SASV). The span at 948 to 958 (NTTKYKSRKSR) shows a compositional bias: basic residues. A compositionally biased stretch (basic and acidic residues) spans 977–989 (MKNDYEVVVDGRT). Residues 990-1000 (RLPRRATKTKK) are compositionally biased toward basic residues. Over residues 1059–1076 (PSEEQKNSSRLREGREDS) the composition is skewed to basic and acidic residues. Phosphoserine is present on residues Ser-1115, Ser-1117, Ser-1124, Ser-1133, Ser-1140, Ser-1144, Ser-1156, Ser-1159, and Ser-1164. At Thr-1168 the chain carries Phosphothreonine. Residues Ser-1183, Ser-1213, and Ser-1216 each carry the phosphoserine modification. The tract at residues 1208–1234 (YMEPESPESCDNHMQNKREGNHAASPL) is disordered. Basic and acidic residues predominate over residues 1217 to 1228 (CDNHMQNKREGN). Phosphoserine is present on residues Ser-1232, Ser-1275, and Ser-1277. A Phosphothreonine modification is found at Thr-1313. Positions 1388–1429 (LLDELEKVEKDSQTLRDLEKELVDIEEKLVQKMRAYHRCERE) form a coiled coil.

The protein belongs to the SYCP2 family. As to quaternary structure, component of the lateral elements of synaptonemal complexes. Heterodimer with SYCP3. Interacts with SMC1A and SMC3. Interacts with TEX11. Post-translationally, phosphorylated. In terms of tissue distribution, detected in testis and spermatocytes (at protein level).

The protein localises to the nucleus. Its subcellular location is the chromosome. Its function is as follows. Major component of the axial/lateral elements of synaptonemal complexes (SCS) during meiotic prophase. Plays a role in the assembly of synaptonemal complexes. Required for normal meiotic chromosome synapsis during oocyte and spermatocyte development and for normal male and female fertility. Required for insertion of SYCP3 into synaptonemal complexes. May be involved in the organization of chromatin by temporarily binding to DNA scaffold attachment regions. Requires SYCP3, but not SYCP1, in order to be incorporated into the axial/lateral elements. This chain is Synaptonemal complex protein 2 (Sycp2), found in Mus musculus (Mouse).